A 507-amino-acid polypeptide reads, in one-letter code: RNA-binding protein Nova-1 (507 aa).

Residues 1–44 (MMAAAPIQQNGTHTGVPIDLDPPDSRKRPLEAPPEAGSTKRTNT) form a disordered region. The short motif at 27 to 43 (KRPLEAPPEAGSTKRTN) is the Bipartite nuclear localization signal element. The KH 1 domain maps to 49 to 116 (QYFLKVLIPS…EALNAVHGFI (68 aa)). The disordered stretch occupies residues 139–171 (QTTVNPDRIKQTLPSSPTTTKSSPSDPMTTSRA). A compositionally biased stretch (low complexity) spans 150 to 169 (TLPSSPTTTKSSPSDPMTTS). Serine 154 bears the Phosphoserine mark. KH domains lie at 171-237 (ANQV…VELI) and 421-488 (KDVV…QYLI). The tract at residues 419-503 (GSKDVVEIAV…YEQGVRAANP (85 aa)) is required for RNA binding.

As to quaternary structure, interacts with PTBP2; the interaction is direct. In terms of tissue distribution, expressed in cerebellum, brain stem, hippocampus, and frontal cortex.

Its subcellular location is the nucleus. Its function is as follows. Functions to regulate alternative splicing in neurons by binding pre-mRNA in a sequence-specific manner to activate exon inclusion or exclusion. It binds specifically to the sequences 5'-YCAY-3' and regulates splicing in only a subset of regulated exons. Binding to an exonic 5'-YCAY-3' cluster changes the protein complexes assembled on pre-mRNA, blocking U1 snRNP binding and exon inclusion, whereas binding to an intronic 5'-YCAY-3' cluster enhances spliceosome assembly and exon inclusion. Binding to 5'-YCAY-3' clusters results in a local and asymmetric action to regulate spliceosome assembly and alternative splicing in neurons. Binding to an exonic 5'-YCAY-3' cluster changed the protein complexes assembled on pre-mRNA, blocking U1 snRNP (small nuclear ribonucleoprotein) binding and exon inclusion, whereas binding to an intronic 5'-YCAY-3' cluster enhanced spliceosome assembly and exon inclusion. With NOVA1, they perform unique biological functions in different brain areas and cell types. Autoregulates its own expression by acting as a splicing repressor. Acts to activate the inclusion of exon E3A in the glycine receptor alpha-2 chain and of exon E9 in gamma-aminobutyric-acid receptor gamma-2 subunit via a distal downstream UCAU-rich intronic splicing enhancer. Acts to regulate a novel glycine receptor alpha-2 chain splice variant (alpha-2N) in developing spinal cord. The polypeptide is RNA-binding protein Nova-1 (Homo sapiens (Human)).